A 319-amino-acid chain; its full sequence is tRNA dimethylallyltransferase (319 aa).

Residue 16–23 (GPTASGKS) participates in ATP binding. A substrate-binding site is contributed by 18–23 (TASGKS). The tract at residues 46–49 (DSMV) is interaction with substrate tRNA.

This sequence belongs to the IPP transferase family. As to quaternary structure, monomer. It depends on Mg(2+) as a cofactor.

It carries out the reaction adenosine(37) in tRNA + dimethylallyl diphosphate = N(6)-dimethylallyladenosine(37) in tRNA + diphosphate. Catalyzes the transfer of a dimethylallyl group onto the adenine at position 37 in tRNAs that read codons beginning with uridine, leading to the formation of N6-(dimethylallyl)adenosine (i(6)A). The protein is tRNA dimethylallyltransferase of Cutibacterium acnes (strain DSM 16379 / KPA171202) (Propionibacterium acnes).